The primary structure comprises 400 residues: Probable tRNA sulfurtransferase (400 aa).

The region spanning 60–164 is the THUMP domain; the sequence is EPIIEKLKNV…KEATYITSGT (105 aa). Residues 182-183, 207-208, R264, G286, and Q295 each bind ATP; these read LL and HF.

This sequence belongs to the ThiI family.

It localises to the cytoplasm. The catalysed reaction is [ThiI sulfur-carrier protein]-S-sulfanyl-L-cysteine + a uridine in tRNA + 2 reduced [2Fe-2S]-[ferredoxin] + ATP + H(+) = [ThiI sulfur-carrier protein]-L-cysteine + a 4-thiouridine in tRNA + 2 oxidized [2Fe-2S]-[ferredoxin] + AMP + diphosphate. It catalyses the reaction [ThiS sulfur-carrier protein]-C-terminal Gly-Gly-AMP + S-sulfanyl-L-cysteinyl-[cysteine desulfurase] + AH2 = [ThiS sulfur-carrier protein]-C-terminal-Gly-aminoethanethioate + L-cysteinyl-[cysteine desulfurase] + A + AMP + 2 H(+). Its pathway is cofactor biosynthesis; thiamine diphosphate biosynthesis. In terms of biological role, catalyzes the ATP-dependent transfer of a sulfur to tRNA to produce 4-thiouridine in position 8 of tRNAs, which functions as a near-UV photosensor. Also catalyzes the transfer of sulfur to the sulfur carrier protein ThiS, forming ThiS-thiocarboxylate. This is a step in the synthesis of thiazole, in the thiamine biosynthesis pathway. The sulfur is donated as persulfide by IscS. The protein is Probable tRNA sulfurtransferase of Oceanobacillus iheyensis (strain DSM 14371 / CIP 107618 / JCM 11309 / KCTC 3954 / HTE831).